Here is a 584-residue protein sequence, read N- to C-terminus: Segmentation polarity homeobox protein engrailed (584 aa).

Disordered stretches follow at residues 1-27 (MALE…PQQH), 141-198 (EESD…SKPS), 343-380 (IGQA…SSST), 392-451 (CSSA…GGKN), and 465-492 (DRPS…PRTA). Pro residues predominate over residues 12 to 23 (APSPPGCLPHSP). A compositionally biased stretch (acidic residues) spans 160 to 174 (TEEDEEEDDDIDVDD). A compositionally biased stretch (polar residues) spans 189 to 198 (HQQSKQSKPS). Low complexity-rich tracts occupy residues 348–380 (STTP…SSST) and 392–405 (CSSA…SPSS). Basic and acidic residues predominate over residues 478–489 (QPKDKTNDEKRP). Positions 486 to 545 (EKRPRTAFSSEQLARLKREFNENRYLTERRRQQLSSELGLNEAQIKIWFQNKRAKIKKST) form a DNA-binding region, homeobox.

This sequence belongs to the engrailed homeobox family.

It is found in the nucleus. In terms of biological role, this protein specifies the body segmentation pattern. It is required for the development of the central nervous system. Transcriptional regulator that repress activated promoters. This chain is Segmentation polarity homeobox protein engrailed (en), found in Drosophila virilis (Fruit fly).